The following is a 236-amino-acid chain: C-&gt;U-editing enzyme APOBEC-1 (236 aa).

One can recognise a CMP/dCMP-type deaminase domain in the interval 10–134; it reads GDPTLRRRIE…QQNRQGLRDL (125 aa). Zn(2+) is bound at residue His61. Glu63 serves as the catalytic Proton donor. 2 residues coordinate Zn(2+): Cys93 and Cys96.

It belongs to the cytidine and deoxycytidylate deaminase family. Homodimer. Interacts with A1CF; form an mRNA editing complex. Interacts with RBM47; form an mRNA editing complex. Found in a complex with CELF2/CUGBP2 and A1CF. Interacts with HNRPAB. Interacts with SYNCRIP. Zn(2+) serves as cofactor. In terms of tissue distribution, expressed exclusively in the small intestine.

It localises to the cytoplasm. It is found in the nucleus. It carries out the reaction a cytidine in mRNA + H2O + H(+) = a uridine in mRNA + NH4(+). The catalysed reaction is cytidine(6666) in apoB mRNA + H2O + H(+) = uridine(6666) in apoB mRNA + NH4(+). Cytidine deaminase catalyzing the cytidine to uridine postranscriptional editing of a variety of mRNAs. Form complexes with cofactors that confer differential editing activity and selectivity. Responsible for the postranscriptional editing of a CAA codon for Gln to a UAA codon for stop in the apolipoprotein B mRNA. Also involved in CGA (Arg) to UGA (Stop) editing in the NF1 mRNA. May also play a role in the epigenetic regulation of gene expression by participating in DNA demethylation. This is C-&gt;U-editing enzyme APOBEC-1 from Homo sapiens (Human).